A 246-amino-acid chain; its full sequence is 3-deoxy-manno-octulosonate cytidylyltransferase (246 aa).

Belongs to the KdsB family.

Its subcellular location is the cytoplasm. It carries out the reaction 3-deoxy-alpha-D-manno-oct-2-ulosonate + CTP = CMP-3-deoxy-beta-D-manno-octulosonate + diphosphate. It participates in nucleotide-sugar biosynthesis; CMP-3-deoxy-D-manno-octulosonate biosynthesis; CMP-3-deoxy-D-manno-octulosonate from 3-deoxy-D-manno-octulosonate and CTP: step 1/1. It functions in the pathway bacterial outer membrane biogenesis; lipopolysaccharide biosynthesis. Functionally, activates KDO (a required 8-carbon sugar) for incorporation into bacterial lipopolysaccharide in Gram-negative bacteria. This Paramagnetospirillum magneticum (strain ATCC 700264 / AMB-1) (Magnetospirillum magneticum) protein is 3-deoxy-manno-octulosonate cytidylyltransferase.